Consider the following 140-residue polypeptide: Transcription antitermination protein NusB (140 aa).

This sequence belongs to the NusB family.

In terms of biological role, involved in transcription antitermination. Required for transcription of ribosomal RNA (rRNA) genes. Binds specifically to the boxA antiterminator sequence of the ribosomal RNA (rrn) operons. This is Transcription antitermination protein NusB from Myxococcus xanthus (strain DK1622).